A 135-amino-acid chain; its full sequence is Small ribosomal subunit protein bS16 (135 aa).

Residues 94–135 (IGTEMETWQQRNDSRLKRGLDRKAIRRKRKKEAEAKEKESAG) form a disordered region. Basic and acidic residues-rich tracts occupy residues 105 to 116 (NDSRLKRGLDRK) and 124 to 135 (KEAEAKEKESAG).

The protein belongs to the bacterial ribosomal protein bS16 family.

The sequence is that of Small ribosomal subunit protein bS16 from Chloroherpeton thalassium (strain ATCC 35110 / GB-78).